Here is a 93-residue protein sequence, read N- to C-terminus: Large ribosomal subunit protein eL42 (93 aa).

Positions 11, 14, 71, and 74 each coordinate Zn(2+). The segment at 11–74 adopts a C4-type zinc-finger fold; the sequence is CRYCGKHTLH…VNIRFRCTEC (64 aa).

This sequence belongs to the eukaryotic ribosomal protein eL42 family. As to quaternary structure, part of the 50S ribosomal subunit. Requires Zn(2+) as cofactor.

Binds to the 23S rRNA. This is Large ribosomal subunit protein eL42 from Archaeoglobus fulgidus (strain ATCC 49558 / DSM 4304 / JCM 9628 / NBRC 100126 / VC-16).